Consider the following 887-residue polypeptide: Translation initiation factor IF-2 (887 aa).

Disordered regions lie at residues 31 to 87 (KLAQ…PRRI), 94 to 113 (SFVSEDLNSPQPPVPVDSDA), and 129 to 285 (VETE…KWRK). Residues 42–59 (SSSEKPSTKVPEKIAKEK) are compositionally biased toward basic and acidic residues. Basic and acidic residues-rich tracts occupy residues 150–171 (VVAKEPPAPKKEPEVVVKKEPP) and 199–212 (PKKEDKPAPKEKTK). A compositionally biased stretch (low complexity) spans 213 to 223 (TTQTKPQQSSD). The span at 241-273 (YRRDVSKKSGSDFRDRAKKDDNPKAFTGRDRYG) shows a compositional bias: basic and acidic residues. The tr-type G domain maps to 393 to 562 (TRPPIVAFMG…ALQAEVLELK (170 aa)). The G1 stretch occupies residues 402 to 409 (GHVDHGKT). A GTP-binding site is contributed by 402 to 409 (GHVDHGKT). The interval 427–431 (AITQH) is G2. The segment at 448-451 (DTPG) is G3. GTP-binding positions include 448 to 452 (DTPGH) and 502 to 505 (NKCD). The segment at 502-505 (NKCD) is G4. The G5 stretch occupies residues 538 to 540 (SAK).

It belongs to the TRAFAC class translation factor GTPase superfamily. Classic translation factor GTPase family. IF-2 subfamily.

Its subcellular location is the cytoplasm. One of the essential components for the initiation of protein synthesis. Protects formylmethionyl-tRNA from spontaneous hydrolysis and promotes its binding to the 30S ribosomal subunits. Also involved in the hydrolysis of GTP during the formation of the 70S ribosomal complex. The protein is Translation initiation factor IF-2 of Chlamydia caviae (strain ATCC VR-813 / DSM 19441 / 03DC25 / GPIC) (Chlamydophila caviae).